Here is a 160-residue protein sequence, read N- to C-terminus: Early E3 18.5 kDa glycoprotein (160 aa).

The signal sequence occupies residues 1–17 (MIRYIILGLLTLASAHG). Over 18-124 (TTQKVDFKEP…PPQNCVENTG (107 aa)) the chain is Lumenal. 2 cysteine pairs are disulfide-bonded: cysteine 29–cysteine 46 and cysteine 40–cysteine 101. Asparagine 30 and asparagine 79 each carry an N-linked (GlcNAc...) asparagine; by host glycan. A helical transmembrane segment spans residues 125 to 145 (TFCCTAMLITVLALVCTLLYI). The Cytoplasmic portion of the chain corresponds to 146–160 (KYKSRRSFIEEKKMP). Positions 157–160 (KKMP) match the Di-lysine motif motif.

It belongs to the adenoviridae E19 family. Post-translationally, both disulfide bonds are absolutely critical for the interaction with MHC antigens. In terms of processing, N-glycosylated; high-mannose.

The protein localises to the host endoplasmic reticulum membrane. Its function is as follows. Binds and retains class I heavy chains in the endoplasmic reticulum during the early period of virus infection, thereby impairing their transport to the cell surface. Also delays the expression of class I alleles that it cannot affect by direct retention. Binds transporters associated with antigen processing (TAP) and acts as a tapasin inhibitor, preventing class I/TAP association. In consequence, infected cells are masked for immune recognition by cytotoxic T-lymphocytes. The protein is Early E3 18.5 kDa glycoprotein of Homo sapiens (Human).